A 222-amino-acid chain; its full sequence is Large ribosomal subunit protein mL64 (222 aa).

Disordered regions lie at residues L14 to P40 and K188 to S222. Residues E144–D213 are a coiled coil. The Nuclear localization signal signature appears at K184–E200. Positions K188 to A201 are enriched in basic and acidic residues. The span at R202–A216 shows a compositional bias: low complexity.

The protein belongs to the mitochondrion-specific ribosomal protein mL64 family. In terms of assembly, component of the mitochondrial ribosome large subunit (39S) which comprises a 16S rRNA and about 50 distinct proteins. Interacts with GADD45A, GADD45B and GADD45G. Interacts with NR4A1 via the NR4A1 AB domain. Interacts with ATAD3A and ATAD3B.

The protein localises to the mitochondrion. The protein resides in the nucleus. Acts as a negative regulator of G1 to S cell cycle phase progression by inhibiting cyclin-dependent kinases. Inhibitory effects are additive with GADD45 proteins but also occur in the absence of GADD45 proteins. Acts as a repressor of the orphan nuclear receptor NR4A1 by inhibiting AB domain-mediated transcriptional activity. May be involved in the hormone-mediated regulation of NR4A1 transcriptional activity. May play a role in mitochondrial protein synthesis. This Chlorocebus aethiops (Green monkey) protein is Large ribosomal subunit protein mL64 (GADD45GIP1).